The primary structure comprises 8886 residues: Obscurin (8886 aa).

4 consecutive Ig-like domains span residues 9–99, 109–201, 234–320, and 329–415; these read PRFL…LRVD, PHFL…LVVD, PPSP…QTYS, and PTVP…AELS. Cysteines 30 and 81 form a disulfide. A disordered region spans residues 135–165; sequence SPQPAVSWSKDGRRLGPPDAPHVRVEEHGES. The segment covering 144–164 has biased composition (basic and acidic residues); it reads KDGRRLGPPDAPHVRVEEHGE. 2 disulfide bridges follow: cysteine 257/cysteine 309 and cysteine 352/cysteine 402. Serine 393 carries the post-translational modification Phosphoserine. One can recognise a Fibronectin type-III 1 domain in the interval 513 to 610; the sequence is PPADPVVKAK…FPGTMHLVPM (98 aa). Ig-like domains are found at residues 702 to 793, 859 to 951, 951 to 1043, 1043 to 1135, 1135 to 1227, 1227 to 1319, 1319 to 1407, 1411 to 1503, 1503 to 1595, 1595 to 1687, 1687 to 1779, 1779 to 1871, 1871 to 1963, 1963 to 2051, 2055 to 2147, 2152 to 2241, 2242 to 2325, 2329 to 2415, 2420 to 2504, 2598 to 2681, 2721 to 2812, 2900 to 2984, 3078 to 3162, 3258 to 3342, 3348 to 3431, 3527 to 3610, 3616 to 3700, 3785 to 3876, 3881 to 3964, 4042 to 4125, 4130 to 4213, 4219 to 4301, 4307 to 4389, 4395 to 4477, 4483 to 4565, 4571 to 4653, 4659 to 4741, 4746 to 4829, 4833 to 4916, 4923 to 5007, 5013 to 5105, 5378 to 5464, and 5557 to 5659; these read PSSK…QDIT, PKLV…VAEP, PKMV…VTEP, PKLV…VTEP, PKLV…FRLD, PKLA…VAEP, PKLM…VAEP, TRLM…VAEA, PERP…EEVA, AKFS…ARLT, PRVV…AALR, PVLF…AKLN, PVSF…ASLR, PVTL…QSIT, PVVL…AEVT, PVVF…SKVS, PVDI…AKLC, NRFT…ARLL, PSIF…SSIV, PVRF…ATLT, ATLT…ATLT, PAKF…ATLT, PTKF…ATLS, PSRF…ATLS, PRFI…ATLN, PRFI…AVLT, PKFT…ATLS, PRFI…ATLS, PAKF…ATLS, PQVV…TSAT, PVRF…ARLS, PKFK…PEVT, LEVL…ARLS, and PQMV…TFNV. 14 cysteine pairs are disulfide-bonded: cysteine 885/cysteine 935, cysteine 977/cysteine 1027, cysteine 1069/cysteine 1119, cysteine 1161/cysteine 1211, cysteine 1253/cysteine 1303, cysteine 1345/cysteine 1395, cysteine 1437/cysteine 1487, cysteine 1529/cysteine 1579, cysteine 1621/cysteine 1671, cysteine 1713/cysteine 1763, cysteine 1805/cysteine 1855, cysteine 1897/cysteine 1947, cysteine 1989/cysteine 2039, and cysteine 2081/cysteine 2131. Cysteine 2263 and cysteine 2313 are joined by a disulfide. Cystine bridges form between cysteine 2620-cysteine 2669, cysteine 2743-cysteine 2793, cysteine 2922-cysteine 2972, cysteine 3100-cysteine 3150, cysteine 3280-cysteine 3330, cysteine 3369-cysteine 3419, cysteine 3549-cysteine 3599, and cysteine 3638-cysteine 3688. Serine 3321 carries the phosphoserine modification. A Phosphoserine modification is found at serine 3802. 14 disulfides stabilise this stretch: cysteine 3815–cysteine 3864, cysteine 3903–cysteine 3952, cysteine 4064–cysteine 4113, cysteine 4152–cysteine 4201, cysteine 4240–cysteine 4289, cysteine 4328–cysteine 4377, cysteine 4416–cysteine 4465, cysteine 4504–cysteine 4553, cysteine 4592–cysteine 4641, cysteine 4680–cysteine 4729, cysteine 4768–cysteine 4817, cysteine 4856–cysteine 4906, cysteine 4945–cysteine 4995, and cysteine 5034–cysteine 5086. Serine 4960 bears the Phosphoserine mark. The Fibronectin type-III 2 domain maps to 5471-5569; it reads PPEDAEVVGR…VKIAPAPAPA (99 aa). Residues cysteine 5590 and cysteine 5643 are joined by a disulfide bond. At serine 5699 the chain carries Phosphoserine. The segment at 5700–5736 is disordered; it reads REPTLDSISELPEEDSRVQHLRQEAEETAPDLSEGYS. Threonine 5703 is subject to Phosphothreonine. Phosphoserine is present on serine 5706. Over residues 5713-5724 the composition is skewed to basic and acidic residues; the sequence is EDSRVQHLRQEA. Threonine 5737 carries the post-translational modification Phosphothreonine. Phosphoserine is present on serine 5754. The region spanning 5821 to 5850 is the IQ domain; that stretch reads LDKAAVKIQAAFKGYKVRKEMKQQEGPVFS. An Ig-like 48 domain is found at 5847 to 5930; the sequence is PVFSRTFGDT…QVSTKSGRVS (84 aa). Cysteine 5868 and cysteine 5920 are joined by a disulfide. Residues 5977-5996 form a disordered region; that stretch reads EEELFLSADEGPGEPEEPAD. Ig-like domains follow at residues 6077–6166, 6209–6298, and 6320–6416; these read PVFL…AELR, PQVL…ARLL, and PRIL…LHIS. Cysteine 6098 and cysteine 6150 are joined by a disulfide. The interval 6504 to 6546 is disordered; that stretch reads KLQVPGGDSDEETKTPSASPRHGRSRPSSSVQESSSESEDGDS. Serine 6512 is modified (phosphoserine). The residue at position 6518 (threonine 6518) is a Phosphothreonine. The span at 6519-6538 shows a compositional bias: low complexity; the sequence is PSASPRHGRSRPSSSVQESS. Serine 6520 and serine 6522 each carry phosphoserine. Positions 6549–6616 constitute an SH3 domain; sequence EIFDIYVVTA…SPAYLDKRLK (68 aa). One can recognise a DH domain in the interval 6642-6826; it reads RLSSVIQELL…SALPQRAENK (185 aa). Residues 6844–6953 form the PH domain; it reads EPIRQGHFIV…WVKEICGIQQ (110 aa). A 1,2-diacyl-sn-glycero-3-phospho-(1D-myo-inositol-4,5-bisphosphate) is bound at residue arginine 6924. Arginine 6929 is a binding site for a 1,2-diacyl-sn-glycero-3-phospho-(1D-myo-inositol-3,4-bisphosphate). Ig-like domains follow at residues 6963-7046 and 7057-7147; these read PEFE…GNAS and PRFV…GELY. 2 disulfides stabilise this stretch: cysteine 6984–cysteine 7036 and cysteine 7078–cysteine 7131. The interval 7200–7257 is disordered; the sequence is ALGPSPGDLPNTRQSEPPAFEEAASQIPGAASGTPEVSQPGTHKGLEQETTSSGSQGW. The segment covering 7247-7257 has biased composition (polar residues); that stretch reads QETTSSGSQGW. Residues 7306-7394 enclose the Ig-like 54 domain; the sequence is PSMQVTIEDV…GQVLCKAELL (89 aa). Positions 7416–7669 constitute a Protein kinase 1 domain; it reads YDVQEEIGRG…TSQCLAHPWF (254 aa). Residues 7422-7430 and lysine 7445 each bind ATP; that span reads IGRGVFGFV. The Proton acceptor role is filled by aspartate 7535. Disordered regions lie at residues 7717 to 7810, 7879 to 8106, and 8150 to 8180; these read GPPD…SPGC, EQAS…TTRK, and SSEE…VPLR. At serine 7779 the chain carries Phosphoserine. The span at 7793–7804 shows a compositional bias: low complexity; that stretch reads AAVPASPQSAGP. The segment covering 7941–7952 has biased composition (basic and acidic residues); it reads TTAKDRGHKEGF. Residues 7986–7996 show a composition bias toward polar residues; sequence SCHSELGSGSQ. 2 stretches are compositionally biased toward low complexity: residues 8000–8014 and 8053–8073; these read GPPS…PPQS and GSLS…ASQV. Serine 8161 carries the phosphoserine modification. Positions 8380-8464 constitute an Ig-like 55 domain; that stretch reads KGRDQELSDE…VSNPLGTAVT (85 aa). Cysteine 8401 and cysteine 8453 are oxidised to a cystine. Residues 8474–8566 enclose the Fibronectin type-III 3 domain; that stretch reads PSSSPRPEVG…PSEQVLLGGP (93 aa). Residues 8590–8842 enclose the Protein kinase 2 domain; sequence FAFQMQIRRG…ASTCLQCGWL (253 aa). ATP contacts are provided by residues 8596–8604 and lysine 8619; that span reads IRRGRFSVV. The Proton acceptor role is filled by aspartate 8709.

This sequence belongs to the protein kinase superfamily. CAMK Ser/Thr protein kinase family. As to quaternary structure, interacts (via protein kinase domain 1) with CDH2 and (via protein kinase domain 1) with ATP1B1. Isoform 2 is found in a complex with DSG2, DESM, GJA1, CDH2 and VCL. Isoform 3 is found in a complex with DSG2, DESM, GJA1, CDH2, ANK3 and VCL. It depends on Mg(2+) as a cofactor. Post-translationally, autophosphorylated by protein kinase domain 1 and 2. Two small isoforms, one probably containing protein kinase domain 2 and a partial protein kinase domain 1 and one containing only protein kinase domain 2, are glycosylated. In terms of tissue distribution, expressed in skeletal muscles including flexor digitorum brevis (FDB), soleus and tibialis anterior muscles, and to a lesser extent in heart muscles (at protein level). Isoform 2 and isoform 3 are expressed in the myocardium (at protein level).

The protein localises to the cytoplasm. The protein resides in the myofibril. It is found in the sarcomere. Its subcellular location is the m line. It localises to the z line. The protein localises to the cell membrane. The protein resides in the sarcolemma. It is found in the nucleus. Its subcellular location is the secreted. The catalysed reaction is L-seryl-[protein] + ATP = O-phospho-L-seryl-[protein] + ADP + H(+). It carries out the reaction L-threonyl-[protein] + ATP = O-phospho-L-threonyl-[protein] + ADP + H(+). In terms of biological role, structural component of striated muscles which plays a role in myofibrillogenesis. Probably involved in the assembly of myosin into sarcomeric A bands in striated muscle. Has serine/threonine protein kinase activity and phosphorylates N-cadherin CDH2 and sodium/potassium-transporting ATPase subunit ATP1B1. Binds (via the PH domain) strongly to phosphatidylinositol 3,4-bisphosphate (PtdIns(3,4)P2) and phosphatidylinositol 4,5-bisphosphate (PtdIns(4,5)P2), and to a lesser extent to phosphatidylinositol 3-phosphate (PtdIns(3)P), phosphatidylinositol 4-phosphate (PtdIns(4)P), phosphatidylinositol 5-phosphate (PtdIns(5)P) and phosphatidylinositol 3,4,5-trisphosphate (PtdIns(3,4,5)P3). Isoform 2 and isoform 3: bind phosphatidylinositol bisphosphates (PIP2s) via their PH domains and negatively regulate the PI3K/AKT/mTOR signaling pathway, thus contributing to the regulation of cardiomyocyte size and adhesion. This chain is Obscurin, found in Mus musculus (Mouse).